A 532-amino-acid polypeptide reads, in one-letter code: Probable inorganic phosphate transporter 1-9 (532 aa).

Topologically, residues M1–A22 are cytoplasmic. A helical transmembrane segment spans residues I23–I43. At M44 to L62 the chain is on the extracellular side. A helical membrane pass occupies residues S63–L83. Residues G84–K91 lie on the Cytoplasmic side of the membrane. The chain crosses the membrane as a helical span at residues V92–C112. At T113 to G124 the chain is on the extracellular side. The helical transmembrane segment at F125–M145 threads the bilayer. Topologically, residues S146–R154 are cytoplasmic. A helical membrane pass occupies residues G155 to V175. Over T176 to S207 the chain is Extracellular. A helical membrane pass occupies residues D208–W228. Residues R229–L292 lie on the Cytoplasmic side of the membrane. A helical transmembrane segment spans residues H293–T313. Residues S314–K343 are Extracellular-facing. A helical membrane pass occupies residues L344 to I364. Over D365–K371 the chain is Cytoplasmic. The chain crosses the membrane as a helical span at residues I372–S392. The Extracellular segment spans residues W393–M406. A helical transmembrane segment spans residues V407–I427. The Cytoplasmic segment spans residues P428–H441. Residues G442–A462 form a helical membrane-spanning segment. Over T463–R478 the chain is Extracellular. The helical transmembrane segment at I479–T499 threads the bilayer. Residues R500–Y532 are Cytoplasmic-facing. Positions E509–Y532 are disordered. A compositionally biased stretch (polar residues) spans V515–A524.

Belongs to the major facilitator superfamily. Phosphate:H(+) symporter (TC 2.A.1.9) family.

The protein localises to the membrane. Functionally, high-affinity transporter for external inorganic phosphate. The sequence is that of Probable inorganic phosphate transporter 1-9 (PHT1-9) from Arabidopsis thaliana (Mouse-ear cress).